Here is a 143-residue protein sequence, read N- to C-terminus: Large ribosomal subunit protein uL11 (143 aa).

This sequence belongs to the universal ribosomal protein uL11 family. As to quaternary structure, part of the ribosomal stalk of the 50S ribosomal subunit. Interacts with L10 and the large rRNA to form the base of the stalk. L10 forms an elongated spine to which L12 dimers bind in a sequential fashion forming a multimeric L10(L12)X complex. Post-translationally, one or more lysine residues are methylated.

In terms of biological role, forms part of the ribosomal stalk which helps the ribosome interact with GTP-bound translation factors. This Psychrobacter sp. (strain PRwf-1) protein is Large ribosomal subunit protein uL11.